A 430-amino-acid polypeptide reads, in one-letter code: MLKEGSSLDLSASSSSGTLRSDNSFGNSPLDRITSLLILIYKSIRACFKWIYSKSFGIICILFVILDVLTTVFFKRFIDHTKNYVMFTIQVIIFTFWIIVCCIAILCFLFNREYMKRHFNVRPLVFLGFLDMLSTGLSANGSAHTSGLMLVLLGQISVPLTMVSCKLILSKKYHHYQYISSAIILTFAVLKPILNRTDTTDNRFYNNMLYLLASVPDSIASALREKQYTSKFFHVVKYQFFGFLFHFFYNILYTLLFTLPFNSVKGYFDSLYKLCVNGYKCIFFGVNTITENCGPTLIPTCDNCLEAFKIYCLYILFSSAIRVAYVFIMLDGSVTFTLLLGTVKVPLTSIAFSLRFIAGDSTTSFNLLDVVCFLGIVAGLLLYALGSKKIQEETDLLESPLIDDAESEHELLSTGTEKLMRSEICHDLFT.

The disordered stretch occupies residues 1-22; the sequence is MLKEGSSLDLSASSSSGTLRSD. Topologically, residues 1–53 are cytoplasmic; that stretch reads MLKEGSSLDLSASSSSGTLRSDNSFGNSPLDRITSLLILIYKSIRACFKWIYS. The segment covering 7–21 has biased composition (low complexity); the sequence is SLDLSASSSSGTLRS. A helical transmembrane segment spans residues 54 to 74; sequence KSFGIICILFVILDVLTTVFF. Residues 75 to 88 lie on the Vacuolar side of the membrane; it reads KRFIDHTKNYVMFT. The helical transmembrane segment at 89–109 threads the bilayer; that stretch reads IQVIIFTFWIIVCCIAILCFL. Topologically, residues 110–122 are cytoplasmic; it reads FNREYMKRHFNVR. Residues 123-143 traverse the membrane as a helical segment; the sequence is PLVFLGFLDMLSTGLSANGSA. At 144–147 the chain is on the vacuolar side; the sequence is HTSG. The helical transmembrane segment at 148–168 threads the bilayer; the sequence is LMLVLLGQISVPLTMVSCKLI. The Cytoplasmic segment spans residues 169–173; the sequence is LSKKY. A helical membrane pass occupies residues 174–194; the sequence is HHYQYISSAIILTFAVLKPIL. The N-linked (GlcNAc...) asparagine glycan is linked to Asn195. Over 195–206 the chain is Vacuolar; the sequence is NRTDTTDNRFYN. The helical transmembrane segment at 207 to 223 threads the bilayer; the sequence is NMLYLLASVPDSIASAL. Residues 224–239 are Cytoplasmic-facing; sequence REKQYTSKFFHVVKYQ. A helical membrane pass occupies residues 240 to 260; that stretch reads FFGFLFHFFYNILYTLLFTLP. The Vacuolar segment spans residues 261-306; the sequence is FNSVKGYFDSLYKLCVNGYKCIFFGVNTITENCGPTLIPTCDNCLE. 2 cysteine pairs are disulfide-bonded: Cys281–Cys304 and Cys293–Cys301. A helical membrane pass occupies residues 307–329; sequence AFKIYCLYILFSSAIRVAYVFIM. At 330 to 335 the chain is on the cytoplasmic side; that stretch reads LDGSVT. A helical transmembrane segment spans residues 336–358; the sequence is FTLLLGTVKVPLTSIAFSLRFIA. Residues 359 to 364 lie on the Vacuolar side of the membrane; sequence GDSTTS. Residues 365-385 form a helical membrane-spanning segment; sequence FNLLDVVCFLGIVAGLLLYAL. Residues 386–430 are Cytoplasmic-facing; that stretch reads GSKKIQEETDLLESPLIDDAESEHELLSTGTEKLMRSEICHDLFT.

It belongs to the CRT-like transporter family.

It is found in the vacuole membrane. Functionally, nutrient transporter. Involved in maintaining the osmotic homeostasis of the digestive vacuole. The protein is Putative chloroquine resistance transporter of Theileria annulata.